The following is a 249-amino-acid chain: MSRTLPHLLSPDPASPFPPAERALREPDGLLAIGGDLHPQRLLNAYAHGIFPWFSDGQPLLWWSPNPRTVFRTDAIHLSSRFRRQLRTCTWTLRADTAFAQVIAACASSPRPGQDGTWITDQMQEAYLDLHRRGYAHSVEVFDGARLVGGIYGVAIGQMFFGESMFSGASGGSKIALAALAAKLHGLGWPLIDAQVENAHLMRLGAQRLPREQFLQHVATQVALPEPPGSWTQRYGERHASGLAGVRLT.

Positions 1-21 (MSRTLPHLLSPDPASPFPPAE) are disordered.

Belongs to the L/F-transferase family.

The protein localises to the cytoplasm. It carries out the reaction N-terminal L-lysyl-[protein] + L-leucyl-tRNA(Leu) = N-terminal L-leucyl-L-lysyl-[protein] + tRNA(Leu) + H(+). The catalysed reaction is N-terminal L-arginyl-[protein] + L-leucyl-tRNA(Leu) = N-terminal L-leucyl-L-arginyl-[protein] + tRNA(Leu) + H(+). It catalyses the reaction L-phenylalanyl-tRNA(Phe) + an N-terminal L-alpha-aminoacyl-[protein] = an N-terminal L-phenylalanyl-L-alpha-aminoacyl-[protein] + tRNA(Phe). Its function is as follows. Functions in the N-end rule pathway of protein degradation where it conjugates Leu, Phe and, less efficiently, Met from aminoacyl-tRNAs to the N-termini of proteins containing an N-terminal arginine or lysine. This is Leucyl/phenylalanyl-tRNA--protein transferase from Xanthomonas campestris pv. campestris (strain B100).